The chain runs to 534 residues: ATP synthase subunit alpha (534 aa).

ATP is bound at residue 170 to 177 (GDRQTGKT). Residues 505–534 (HEDARVKSETAQAAGKDKDEKAAATAGAGK) are disordered.

Belongs to the ATPase alpha/beta chains family. As to quaternary structure, F-type ATPases have 2 components, CF(1) - the catalytic core - and CF(0) - the membrane proton channel. CF(1) has five subunits: alpha(3), beta(3), gamma(1), delta(1), epsilon(1). CF(0) has three main subunits: a(1), b(2) and c(9-12). The alpha and beta chains form an alternating ring which encloses part of the gamma chain. CF(1) is attached to CF(0) by a central stalk formed by the gamma and epsilon chains, while a peripheral stalk is formed by the delta and b chains.

The protein localises to the cell inner membrane. The enzyme catalyses ATP + H2O + 4 H(+)(in) = ADP + phosphate + 5 H(+)(out). Produces ATP from ADP in the presence of a proton gradient across the membrane. The alpha chain is a regulatory subunit. The chain is ATP synthase subunit alpha from Acidobacterium capsulatum (strain ATCC 51196 / DSM 11244 / BCRC 80197 / JCM 7670 / NBRC 15755 / NCIMB 13165 / 161).